We begin with the raw amino-acid sequence, 110 residues long: Phosphoribosyl-ATP pyrophosphatase (110 aa).

This sequence belongs to the PRA-PH family.

The protein resides in the cytoplasm. It catalyses the reaction 1-(5-phospho-beta-D-ribosyl)-ATP + H2O = 1-(5-phospho-beta-D-ribosyl)-5'-AMP + diphosphate + H(+). It participates in amino-acid biosynthesis; L-histidine biosynthesis; L-histidine from 5-phospho-alpha-D-ribose 1-diphosphate: step 2/9. This is Phosphoribosyl-ATP pyrophosphatase from Pseudomonas syringae pv. tomato (strain ATCC BAA-871 / DC3000).